We begin with the raw amino-acid sequence, 55 residues long: Cytochrome b-c1 complex subunit 9 (55 aa).

The Mitochondrial matrix portion of the chain corresponds to 1–15; sequence MKVIYNTLFKRTSTY. A helical membrane pass occupies residues 16–41; sequence AVAIIASAFFFERALDVTSVAIFEGI. Over 42-55 the chain is Chloroplast intermembrane; it reads NKGKLWKDIKGKYE.

This sequence belongs to the UQCR10/QCR9 family. As to quaternary structure, component of the ubiquinol-cytochrome c oxidoreductase (cytochrome b-c1 complex, complex III, CIII), a multisubunit enzyme composed of 3 respiratory subunits cytochrome b, cytochrome c1 and Rieske protein, 2 core protein subunits, and additional low-molecular weight protein subunits. The complex exists as an obligatory dimer and forms supercomplexes (SCs) in the inner mitochondrial membrane with cytochrome c oxidase (complex IV, CIV).

Its subcellular location is the mitochondrion inner membrane. In terms of biological role, component of the ubiquinol-cytochrome c oxidoreductase, a multisubunit transmembrane complex that is part of the mitochondrial electron transport chain which drives oxidative phosphorylation. The respiratory chain contains 3 multisubunit complexes succinate dehydrogenase (complex II, CII), ubiquinol-cytochrome c oxidoreductase (cytochrome b-c1 complex, complex III, CIII) and cytochrome c oxidase (complex IV, CIV), that cooperate to transfer electrons derived from NADH and succinate to molecular oxygen, creating an electrochemical gradient over the inner membrane that drives transmembrane transport and the ATP synthase. The cytochrome b-c1 complex catalyzes electron transfer from ubiquinol to cytochrome c, linking this redox reaction to translocation of protons across the mitochondrial inner membrane, with protons being carried across the membrane as hydrogens on the quinol. In the process called Q cycle, 2 protons are consumed from the matrix, 4 protons are released into the intermembrane space and 2 electrons are passed to cytochrome c. The protein is Cytochrome b-c1 complex subunit 9 (ox) of Drosophila melanogaster (Fruit fly).